The sequence spans 173 residues: Chorion class B protein Ld32 (173 aa).

Residues 1 to 7 (FVQSALS) form the signal peptide.

Belongs to the chorion protein family.

Its function is as follows. This protein is one of many from the eggshell of the gypsy moth. This chain is Chorion class B protein Ld32, found in Lymantria dispar (Gypsy moth).